A 155-amino-acid polypeptide reads, in one-letter code: Small ribosomal subunit protein uS7 (155 aa).

Belongs to the universal ribosomal protein uS7 family. Part of the 30S ribosomal subunit. Contacts proteins S9 and S11.

One of the primary rRNA binding proteins, it binds directly to 16S rRNA where it nucleates assembly of the head domain of the 30S subunit. Is located at the subunit interface close to the decoding center, probably blocks exit of the E-site tRNA. The chain is Small ribosomal subunit protein uS7 from Pseudothermotoga lettingae (strain ATCC BAA-301 / DSM 14385 / NBRC 107922 / TMO) (Thermotoga lettingae).